Here is a 214-residue protein sequence, read N- to C-terminus: Outer-membrane lipoprotein carrier protein (214 aa).

The signal sequence occupies residues 1-24 (MKIKLAFAVLLALCLSLSVMPVLA).

Belongs to the LolA family. As to quaternary structure, monomer.

The protein resides in the periplasm. Functionally, participates in the translocation of lipoproteins from the inner membrane to the outer membrane. Only forms a complex with a lipoprotein if the residue after the N-terminal Cys is not an aspartate (The Asp acts as a targeting signal to indicate that the lipoprotein should stay in the inner membrane). This is Outer-membrane lipoprotein carrier protein from Alkalilimnicola ehrlichii (strain ATCC BAA-1101 / DSM 17681 / MLHE-1).